A 237-amino-acid chain; its full sequence is Thrombin-like enzyme agkihpin-1 (237 aa).

Met1 is a propeptide. Residues 2 to 228 (ILGDDECNIN…HLDWIENIIA (227 aa)) enclose the Peptidase S1 domain. A disulfide bridge connects residues Cys27 and Cys43. His42 serves as the catalytic Charge relay system. An N-linked (GlcNAc...) asparagine glycan is attached at Asn80. Asp87 acts as the Charge relay system in catalysis. Disulfide bonds link Cys119/Cys189, Cys151/Cys168, and Cys179/Cys204. The Charge relay system role is filled by Ser183.

This sequence belongs to the peptidase S1 family. Snake venom subfamily. Expressed by the venom gland.

The protein resides in the secreted. With respect to regulation, the hydrolysis of TAMe (tosyl-arginine methyl ester) substrate is activated by Ca(2+), Fe(3+), Mg(2+) and Zn(2+), and inhibited by EDTA, PMSF and DTT. Its function is as follows. Thrombin-like enzyme that shows fibrinogenolytic activity against bovine fibrinogen alpha and beta chains, but not gamma chain. Hydrolyzes fibrin. Enhances ADP-induced human platelet aggregation. Has arginine esterase activity for TAMe (tosyl-arginine methyl ester) substrate. Reduces thrombin-induced thrombosis. Does not have hemorrhagic activity. Reduces the motility of human liver cancer HepG2 cells in a wound-healing assay. This Gloydius halys (Chinese water mocassin) protein is Thrombin-like enzyme agkihpin-1.